Reading from the N-terminus, the 223-residue chain is Endonuclease V (223 aa).

Residues D35 and D103 each contribute to the Mg(2+) site.

Belongs to the endonuclease V family. Requires Mg(2+) as cofactor.

Its subcellular location is the cytoplasm. The enzyme catalyses Endonucleolytic cleavage at apurinic or apyrimidinic sites to products with a 5'-phosphate.. In terms of biological role, DNA repair enzyme involved in the repair of deaminated bases. Selectively cleaves double-stranded DNA at the second phosphodiester bond 3' to a deoxyinosine leaving behind the intact lesion on the nicked DNA. The chain is Endonuclease V from Salmonella enteritidis PT4 (strain P125109).